The following is a 148-amino-acid chain: MPTFKLVLSDPMSGKARQFEVKDPLAQRFIGLKIGDELDGQVLKELIELPKGAKVKITGGSGIEGAPMHPGIPGPVKRYVLADSRPGYHPPKRGMKKKKLMRGNTISDTIVQINAVVVYPEGYAGPPAIPLGAKELQKEKKTEEAPAQ.

Belongs to the eukaryotic ribosomal protein eS6 family.

The sequence is that of Small ribosomal subunit protein eS6 from Pyrobaculum neutrophilum (strain DSM 2338 / JCM 9278 / NBRC 100436 / V24Sta) (Thermoproteus neutrophilus).